The following is a 227-amino-acid chain: Ribosomal RNA large subunit methyltransferase E (227 aa).

Positions 78, 80, 103, 119, and 143 each coordinate S-adenosyl-L-methionine. Lys-183 serves as the catalytic Proton acceptor.

Belongs to the class I-like SAM-binding methyltransferase superfamily. RNA methyltransferase RlmE family.

The protein resides in the cytoplasm. The enzyme catalyses uridine(2552) in 23S rRNA + S-adenosyl-L-methionine = 2'-O-methyluridine(2552) in 23S rRNA + S-adenosyl-L-homocysteine + H(+). Specifically methylates the uridine in position 2552 of 23S rRNA at the 2'-O position of the ribose in the fully assembled 50S ribosomal subunit. The chain is Ribosomal RNA large subunit methyltransferase E from Rickettsia canadensis (strain McKiel).